The chain runs to 262 residues: Ribosomal RNA small subunit methyltransferase A (262 aa).

Residues Asn-12, Leu-14, Gly-38, Glu-60, Asp-83, and Asn-102 each contribute to the S-adenosyl-L-methionine site.

It belongs to the class I-like SAM-binding methyltransferase superfamily. rRNA adenine N(6)-methyltransferase family. RsmA subfamily.

The protein resides in the cytoplasm. The catalysed reaction is adenosine(1518)/adenosine(1519) in 16S rRNA + 4 S-adenosyl-L-methionine = N(6)-dimethyladenosine(1518)/N(6)-dimethyladenosine(1519) in 16S rRNA + 4 S-adenosyl-L-homocysteine + 4 H(+). Its function is as follows. Specifically dimethylates two adjacent adenosines (A1518 and A1519) in the loop of a conserved hairpin near the 3'-end of 16S rRNA in the 30S particle. May play a critical role in biogenesis of 30S subunits. This is Ribosomal RNA small subunit methyltransferase A from Pelagibacter ubique (strain HTCC1062).